Reading from the N-terminus, the 387-residue chain is S-adenosylmethionine synthase (387 aa).

ATP is bound at residue H17. D19 lines the Mg(2+) pocket. E45 contacts K(+). Positions 58 and 101 each coordinate L-methionine. The flexible loop stretch occupies residues 101-111 (QSADIAMGVDA). Residues 166-168 (DAK), 231-232 (RF), D240, 246-247 (RK), A263, and K267 each bind ATP. An L-methionine-binding site is contributed by D240. K271 is an L-methionine binding site.

The protein belongs to the AdoMet synthase family. In terms of assembly, homotetramer; dimer of dimers. The cofactor is Mg(2+). Requires K(+) as cofactor.

Its subcellular location is the cytoplasm. It carries out the reaction L-methionine + ATP + H2O = S-adenosyl-L-methionine + phosphate + diphosphate. Its pathway is amino-acid biosynthesis; S-adenosyl-L-methionine biosynthesis; S-adenosyl-L-methionine from L-methionine: step 1/1. In terms of biological role, catalyzes the formation of S-adenosylmethionine (AdoMet) from methionine and ATP. The overall synthetic reaction is composed of two sequential steps, AdoMet formation and the subsequent tripolyphosphate hydrolysis which occurs prior to release of AdoMet from the enzyme. The protein is S-adenosylmethionine synthase of Rhodospirillum centenum (strain ATCC 51521 / SW).